The primary structure comprises 276 residues: 4-chlorobenzoyl coenzyme A dehalogenase-1 (276 aa).

Residue 66–71 (AGFDLE) coordinates substrate. H93 functions as the Proton acceptor in the catalytic mechanism. G117 serves as a coordination point for substrate. D148 serves as the catalytic Nucleophile. R261 lines the substrate pocket.

The protein belongs to the enoyl-CoA hydratase/isomerase family. As to quaternary structure, homotetramer.

It carries out the reaction 4-chlorobenzoyl-CoA + H2O = 4-hydroxybenzoyl-CoA + chloride + H(+). It participates in xenobiotic degradation; 4-chlorobenzoate degradation; 4-hydroxybenzoate from 4-chlorobenzoate: step 2/3. In terms of biological role, dehalogenates 4-chlorobenzoyl-CoA, 4-iodobenzoyl-CoA, 4-bromobenzoyl-CoA and, at a slower rate, 4-fluorobenzoyl-CoA. Does not dehalogenate 2-chlorobenzoyl-CoA or 3-chlorobenzoyl-CoA. The sequence is that of 4-chlorobenzoyl coenzyme A dehalogenase-1 from Arthrobacter sp.